Reading from the N-terminus, the 485-residue chain is Ataxin-10 (485 aa).

It belongs to the ataxin-10 family.

It localises to the cytoplasm. The protein resides in the perinuclear region. The protein localises to the midbody. In terms of biological role, may play a role in the regulation of cytokinesis. May play a role in signaling by stimulating protein glycosylation. Induces neuritogenesis by activating the Ras-MAP kinase pathway and is necessary for the survival of cerebellar neurons. Does not appear to play a major role in ciliogenesis. The sequence is that of Ataxin-10 (atxn10) from Xenopus tropicalis (Western clawed frog).